The sequence spans 377 residues: MTHRYDVAIVGGGVIGAAIGFELAKRRHRVAIFEKGTMGSGASSAAAGMLGAQSEFSTSSPLVPLALQSRALMPALAEELRERTGIDIGLVEKGLIKLATTEEEADDLYRHYTFWRGIGEPVQWLTKGEALEMEPRLAAEALAGAMYIPGDGQVSAPDLAAALAYAAASAGACLYEYTEVFDIRSDSSGHVLDTTGGTFAAEAVVIASGAWAARLGARVGLSLSVYPVKGECVMVRAPVPLLQTTVFAKNGCYIVPKSGNRLLIGATSTPGTFDRRVSAGGVMNLLHRAAHLVPDIEQAEWVASWSGIRPQTEDGLPYLGEHPERRGLFVAAGHYRNGILLSPLTGLLVADLVERKETAFDLAPFSLTRHIGKVGVE.

Residues 14 to 15 (VI), 34 to 35 (EK), 42 to 43 (AS), 47 to 49 (AGM), and V180 each bind FAD. Positions 309 and 336 each coordinate substrate. 334–340 (HYRNGIL) lines the FAD pocket.

This sequence belongs to the DAO family. ThiO subfamily. Homotetramer. FAD is required as a cofactor.

The enzyme catalyses glycine + O2 + H2O = glyoxylate + H2O2 + NH4(+). The catalysed reaction is N-ethylglycine + O2 + H2O = ethylamine + glyoxylate + H2O2. It catalyses the reaction sarcosine + O2 + H2O = methylamine + glyoxylate + H2O2. It carries out the reaction D-alanine + O2 + H2O = pyruvate + H2O2 + NH4(+). It functions in the pathway cofactor biosynthesis; thiamine diphosphate biosynthesis. Its activity is regulated as follows. Is inhibited at high substrate concentration. Its function is as follows. Catalyzes the FAD-dependent oxidative deamination of various amines and D-amino acids to yield the corresponding alpha-keto acids, ammonia/amine, and hydrogen peroxide. Oxidizes glycine, sarcosine (N-methylglycine), N-ethylglycine, D-proline, D-alanine, glycine-ethyl ester, and some other D-amino acids. Does not act on L-proline. Is essential for thiamine biosynthesis since the oxidation of glycine catalyzed by ThiO generates the glycine imine intermediate (dehydroglycine) required for the biosynthesis of the thiazole ring of thiamine pyrophosphate. This chain is Glycine oxidase, found in Geobacillus kaustophilus (strain HTA426).